Here is a 169-residue protein sequence, read N- to C-terminus: Ureidoglycolate lyase (169 aa).

It belongs to the ureidoglycolate lyase family. In terms of assembly, homodimer. Requires Ni(2+) as cofactor.

The enzyme catalyses (S)-ureidoglycolate = urea + glyoxylate. The protein operates within nitrogen metabolism; (S)-allantoin degradation. Its function is as follows. Catalyzes the catabolism of the allantoin degradation intermediate (S)-ureidoglycolate, generating urea and glyoxylate. Involved in the utilization of allantoin as nitrogen source. This Pseudomonas paraeruginosa (strain DSM 24068 / PA7) (Pseudomonas aeruginosa (strain PA7)) protein is Ureidoglycolate lyase.